The primary structure comprises 183 residues: MSELPKWHGTTILSVRKGGKVVVIGDGQVSMGNTVMKPNARKVRKLGDGSVIGGFAGATADAFTLFDRLERKLEQHGGQLLRAAVELAKDWRTDKYLRNLEAMMIVADREVTLILTGNGDVLEPVGGVAAIGSGGNFALSAARALVDYEADAETICRKAMAIAADLCVFTNDSLTIETLDSAA.

The active site involves Thr-10. Residues Ala-164, Cys-167, and Thr-170 each coordinate Na(+).

It belongs to the peptidase T1B family. HslV subfamily. As to quaternary structure, a double ring-shaped homohexamer of HslV is capped on each side by a ring-shaped HslU homohexamer. The assembly of the HslU/HslV complex is dependent on binding of ATP.

The protein localises to the cytoplasm. It catalyses the reaction ATP-dependent cleavage of peptide bonds with broad specificity.. Its activity is regulated as follows. Allosterically activated by HslU binding. Protease subunit of a proteasome-like degradation complex believed to be a general protein degrading machinery. This chain is ATP-dependent protease subunit HslV, found in Rhizorhabdus wittichii (strain DSM 6014 / CCUG 31198 / JCM 15750 / NBRC 105917 / EY 4224 / RW1) (Sphingomonas wittichii).